Consider the following 495-residue polypeptide: Lysine--tRNA ligase (495 aa).

Mg(2+) is bound by residues glutamate 406 and glutamate 413.

Belongs to the class-II aminoacyl-tRNA synthetase family. As to quaternary structure, homodimer. The cofactor is Mg(2+).

Its subcellular location is the cytoplasm. It carries out the reaction tRNA(Lys) + L-lysine + ATP = L-lysyl-tRNA(Lys) + AMP + diphosphate. The chain is Lysine--tRNA ligase from Leptospira borgpetersenii serovar Hardjo-bovis (strain JB197).